We begin with the raw amino-acid sequence, 381 residues long: Chorismate synthase (381 aa).

2 residues coordinate NADP(+): arginine 41 and arginine 47. FMN-binding positions include 127–129 (RAS), 247–248 (QA), glycine 291, 306–310 (KPIPT), and arginine 332.

This sequence belongs to the chorismate synthase family. Homotetramer. The cofactor is FMNH2.

It catalyses the reaction 5-O-(1-carboxyvinyl)-3-phosphoshikimate = chorismate + phosphate. Its pathway is metabolic intermediate biosynthesis; chorismate biosynthesis; chorismate from D-erythrose 4-phosphate and phosphoenolpyruvate: step 7/7. Catalyzes the anti-1,4-elimination of the C-3 phosphate and the C-6 proR hydrogen from 5-enolpyruvylshikimate-3-phosphate (EPSP) to yield chorismate, which is the branch point compound that serves as the starting substrate for the three terminal pathways of aromatic amino acid biosynthesis. This reaction introduces a second double bond into the aromatic ring system. The chain is Chorismate synthase from Anaeromyxobacter dehalogenans (strain 2CP-1 / ATCC BAA-258).